Consider the following 398-residue polypeptide: MNEQSPALRNFTINFGPQHPAAHGVLRLVLELDGEVVERVDPHIGLLHRGTEKLIETKTYLQAMPYFDRLDYVAPMNQEHAFCLAAERLLGIEVPRRGQLIRVLYSEIGRLLSHLLNVTTQAMDVGALTPPLWGFEEREKLMVFYERASGSRMHANYFRIGGVHQDLPPKLIDDIDAFCDPFLKVVDDLDQLLTGNRIFKQRNVDIGVVTLKQAWEWGFSGVMVRGSGAAWDLRKSQPYDVYAEMEFDVPIGKNGDCYDRYLIRMEEMRQSVRIMKQCIQKLRAPDGQGPVVVTDNKIAPPRRGEMKRSMEALIHHFKLYTEGVHVPAGEIYAAVEAPKGEFGVYLVSDGSNKPYKCKIRAPGFAHLQAMDFLCRGHLLADVSAILGSLDIVFGEVDR.

This sequence belongs to the complex I 49 kDa subunit family. NDH-1 is composed of 14 different subunits. Subunits NuoB, C, D, E, F, and G constitute the peripheral sector of the complex.

It is found in the cell inner membrane. The catalysed reaction is a quinone + NADH + 5 H(+)(in) = a quinol + NAD(+) + 4 H(+)(out). Its function is as follows. NDH-1 shuttles electrons from NADH, via FMN and iron-sulfur (Fe-S) centers, to quinones in the respiratory chain. The immediate electron acceptor for the enzyme in this species is believed to be ubiquinone. Couples the redox reaction to proton translocation (for every two electrons transferred, four hydrogen ions are translocated across the cytoplasmic membrane), and thus conserves the redox energy in a proton gradient. The chain is NADH-quinone oxidoreductase subunit D from Bradyrhizobium sp. (strain BTAi1 / ATCC BAA-1182).